We begin with the raw amino-acid sequence, 359 residues long: Peroxisome assembly protein 12 (359 aa).

Topologically, residues 1-24 are peroxisomal matrix; it reads MSTTIRASQLASSISPKTEEKQPS. A helical membrane pass occupies residues 25 to 52; sequence VFDIIAQENLATSIRPALQHLVKYLAFF. Residues 53-56 lie on the Cytoplasmic side of the membrane; sequence KPKT. Residues 57–81 form a helical membrane-spanning segment; that stretch reads FLSVHRNFDEYYIIFDLILQNHYLR. Topologically, residues 82-106 are peroxisomal matrix; that stretch reads NYGASFTENFYSMKRIASGTGNPPN. The helical transmembrane segment at 107–128 threads the bilayer; the sequence is DGRERIMSLITLVGWPYVENKL. Topologically, residues 129 to 133 are cytoplasmic; that stretch reads NQLYD. A helical membrane pass occupies residues 134–184; that stretch reads RLKEVYECRSWSSINGMKAKCQKMFVIIWPYIKTALKAVKSALQLAYILNR. At 185–253 the chain is on the peroxisomal matrix side; that stretch reads SSIHSPWLYF…ILGLPGIVSR (69 aa). A helical transmembrane segment spans residues 254–281; the sequence is LFAYGLFFVQFLDYMYNTDLAKLTKTGL. Topologically, residues 282–359 are cytoplasmic; sequence DGAIPSPPHK…NVQHLIRLFV (78 aa). The Zn(2+) site is built by C307, C310, C328, and C331. The RING-type; degenerate zinc-finger motif lies at 307 to 346; sequence CPICLKKRVNDTALFVSGYVFCYTCINQYVNTYNKCPVTG.

This sequence belongs to the pex2/pex10/pex12 family. As to quaternary structure, component of the PEX2-PEX10-PEX12 retrotranslocation channel.

It is found in the peroxisome membrane. It functions in the pathway protein modification; protein ubiquitination. Its function is as follows. Component of a retrotranslocation channel required for peroxisome organization by mediating export of the PEX5/prx-5 receptor from peroxisomes to the cytosol, thereby promoting PEX5/prx-5 recycling. The retrotranslocation channel is composed of PEX2/prx-2, PEX10/prx-10 and PEX12/prx-12; each subunit contributing transmembrane segments that coassemble into an open channel that specifically allows the passage of PEX5/prx-5 through the peroxisomal membrane. PEX12/prx-12 also regulates PEX5/prx-5 recycling by activating the E3 ubiquitin-protein ligase activity of PEX10/prx-10. When PEX5 recycling is compromised, PEX12/prx-12 stimulates PEX10-mediated polyubiquitination of PEX5/prx-5, leading to its subsequent degradation. The chain is Peroxisome assembly protein 12 (prx-12) from Caenorhabditis elegans.